A 396-amino-acid chain; its full sequence is Elongation factor Tu (396 aa).

One can recognise a tr-type G domain in the interval lysine 10–glutamate 206. The G1 stretch occupies residues glycine 19–threonine 26. Residue glycine 19 to threonine 26 participates in GTP binding. Mg(2+) is bound at residue threonine 26. The segment at glycine 60–asparagine 64 is G2. A G3 region spans residues aspartate 81–glycine 84. GTP-binding positions include aspartate 81–histidine 85 and asparagine 136–aspartate 139. The segment at asparagine 136–aspartate 139 is G4. A G5 region spans residues serine 174–lysine 176.

It belongs to the TRAFAC class translation factor GTPase superfamily. Classic translation factor GTPase family. EF-Tu/EF-1A subfamily. Monomer.

Its subcellular location is the cytoplasm. It catalyses the reaction GTP + H2O = GDP + phosphate + H(+). Its function is as follows. GTP hydrolase that promotes the GTP-dependent binding of aminoacyl-tRNA to the A-site of ribosomes during protein biosynthesis. The protein is Elongation factor Tu of Methylibium petroleiphilum (strain ATCC BAA-1232 / LMG 22953 / PM1).